The primary structure comprises 1234 residues: MRLSARIIWLILWTVCAAEDCKGPPPRENSEILSGSWSEQLYPEGTQATYKCRPGYRTLGTIVKVCKNGKWVASNPSRICRKKPCGHPGDTPFGSFRLAVGSQFEFGAKVVYTCDDGYQLLGEIDYRECGADGWINDIPLCEVVKCLPVTELENGRIVSGAAETDQEYYFGQVVRFECNSGFKIEGHKEIHCSENGLWSNEKPRCVEILCTPPRVENGDGINVKPVYKENERYHYKCKHGYVPKERGDAVCTGSGWSSQPFCEEKRCSPPYILNGIYTPHRIIHRSDDEIRYECNYGFYPVTGSTVSKCTPTGWIPVPRCTLKPCEFPQFKYGRLYYEESLRPNFPVSIGNKYSYKCDNGFSPPSGYSWDYLRCTAQGWEPEVPCVRKCVFHYVENGDSAYWEKVYVQGQSLKVQCYNGYSLQNGQDTMTCTENGWSPPPKCIRIKTCSASDIHIDNGFLSESSSIYALNRETSYRCKQGYVTNTGEISGSITCLQNGWSPQPSCIKSCDMPVFENSITKNTRTWFKLNDKLDYECLVGFENEYKHTKGSITCTYYGWSDTPSCYERECSVPTLDRKLVVSPRKEKYRVGDLLEFSCHSGHRVGPDSVQCYHFGWSPGFPTCKGQVASCAPPLEILNGEINGAKKVEYSHGEVVKYDCKPRFLLKGPNKIQCVDGNWTTLPVCIEEERTCGDIPELEHGSAKCSVPPYHHGDSVEFICEENFTMIGHGSVSCISGKWTQLPKCVATDQLEKCRVLKSTGIEAIKPKLTEFTHNSTMDYKCRDKQEYERSICINGKWDPEPNCTSKTSCPPPPQIPNTQVIETTVKYLDGEKLSVLCQDNYLTQDSEEMVCKDGRWQSLPRCIEKIPCSQPPTIEHGSINLPRSSEERRDSIESSSHEHGTTFSYVCDDGFRIPEENRITCYMGKWSTPPRCVGLPCGPPPSIPLGTVSLELESYQHGEEVTYHCSTGFGIDGPAFIICEGGKWSDPPKCIKTDCDVLPTVKNAIIRGKSKKSYRTGEQVTFRCQSPYQMNGSDTVTCVNSRWIGQPVCKDNSCVDPPHVPNATIVTRTKNKYLHGDRVRYECNKPLELFGQVEVMCENGIWTEKPKCRDSTGKCGPPPPIDNGDITSLSLPVYEPLSSVEYQCQKYYLLKGKKTITCRNGKWSEPPTCLHACVIPENIMESHNIILKWRHTEKIYSHSGEDIEFGCKYGYYKARDSPPFRTKCINGTINYPTCV.

An N-terminal signal peptide occupies residues 1–18 (MRLSARIIWLILWTVCAA). Sushi domains follow at residues 19 to 82 (EDCK…ICRK), 83 to 143 (KPCG…LCEV), 144 to 207 (VKCL…RCVE), 208 to 264 (ILCT…FCEE), 265 to 322 (KRCS…RCTL), 324 to 386 (PCEF…VPCV), 387 to 444 (RKCV…KCIR), 446 to 507 (KTCS…SCIK), 508 to 566 (SCDM…SCYE), 567 to 624 (RECS…TCKG), 627 to 685 (ASCA…VCIE), 688 to 745 (RTCG…KCVA), 750 to 804 (EKCR…NCTS), 806 to 863 (TSCP…RCIE), 865 to 933 (IPCS…RCVG), 934 to 991 (LPCG…KCIK), 992 to 1050 (TDCD…VCKD), 1051 to 1109 (NSCV…KCRD), 1112 to 1170 (GKCG…TCLH), and 1171 to 1234 (ACVI…PTCV). 40 disulfide bridges follow: C21/C66, C52/C80, C85/C129, C114/C141, C146/C192, C178/C205, C210/C251, C237/C262, C267/C309, C294/C320, C325/C374, C357/C385, C389/C431, C416/C442, C448/C494, C477/C505, C509/C553, C536/C564, C569/C610, C597/C622, C629/C672, C658/C683, C690/C732, C718/C743, C752/C791, C780/C802, C808/C850, C836/C861, C867/C920, C906/C931, C936/C978, C964/C989, C994/C1037, C1023/C1048, C1053/C1096, C1082/C1107, C1114/C1157, C1143/C1168, C1172/C1223, and C1206/C1233. N-linked (GlcNAc...) asparagine glycosylation is found at N676, N721, N773, and N801. Residues 872–896 (TIEHGSINLPRSSEERRDSIESSSH) are disordered. Residues 883 to 896 (SSEERRDSIESSSH) are compositionally biased toward basic and acidic residues. 2 N-linked (GlcNAc...) asparagine glycosylation sites follow: N1030 and N1061. A Phosphoserine modification is found at S1198. An N-linked (GlcNAc...) asparagine glycan is attached at N1225.

As to quaternary structure, homodimer. Also forms homooligomers. Interacts with complement protein C3b; this interaction inhibits complement activation. Interacts with complement protein C3d. Interacts with CR3/ITGAM; this interaction mediates adhesion of neutrophils to pathogens leading to pathogen clearance. Sulfated on tyrosine residues. As to expression, CFH is one of the most abundant complement components in blood where the liver is the major source of CFH protein in vivo. in addition, CFH is secreted by additional cell types including monocytes, fibroblasts, or endothelial cells.

The protein resides in the secreted. Functionally, glycoprotein that plays an essential role in maintaining a well-balanced immune response by modulating complement activation. Acts as a soluble inhibitor of complement, where its binding to self markers such as glycan structures prevents complement activation and amplification on cell surfaces. Accelerates the decay of the complement alternative pathway (AP) C3 convertase C3bBb, thus preventing local formation of more C3b, the central player of the complement amplification loop. As a cofactor of the serine protease factor I, CFH also regulates proteolytic degradation of already-deposited C3b. In addition, mediates several cellular responses through interaction with specific receptors. For example, interacts with CR3/ITGAM receptor and thereby mediates the adhesion of human neutrophils to different pathogens. In turn, these pathogens are phagocytosed and destroyed. The protein is Complement factor H (Cfh) of Mus musculus (Mouse).